The sequence spans 246 residues: Triosephosphate isomerase (246 aa).

Residue 9–11 (NWK) coordinates substrate. The active-site Electrophile is the histidine 95. Residue glutamate 165 is the Proton acceptor of the active site. Substrate contacts are provided by residues glycine 171, serine 210, and 231-232 (GG).

It belongs to the triosephosphate isomerase family. As to quaternary structure, homodimer.

It localises to the cytoplasm. It catalyses the reaction D-glyceraldehyde 3-phosphate = dihydroxyacetone phosphate. Its pathway is carbohydrate biosynthesis; gluconeogenesis. It functions in the pathway carbohydrate degradation; glycolysis; D-glyceraldehyde 3-phosphate from glycerone phosphate: step 1/1. In terms of biological role, involved in the gluconeogenesis. Catalyzes stereospecifically the conversion of dihydroxyacetone phosphate (DHAP) to D-glyceraldehyde-3-phosphate (G3P). The chain is Triosephosphate isomerase from Thermodesulfovibrio yellowstonii (strain ATCC 51303 / DSM 11347 / YP87).